Consider the following 293-residue polypeptide: ATP synthase gamma chain (293 aa).

Belongs to the ATPase gamma chain family. In terms of assembly, F-type ATPases have 2 components, CF(1) - the catalytic core - and CF(0) - the membrane proton channel. CF(1) has five subunits: alpha(3), beta(3), gamma(1), delta(1), epsilon(1). CF(0) has three main subunits: a, b and c.

It is found in the cell inner membrane. Its function is as follows. Produces ATP from ADP in the presence of a proton gradient across the membrane. The gamma chain is believed to be important in regulating ATPase activity and the flow of protons through the CF(0) complex. In Nitrosospira multiformis (strain ATCC 25196 / NCIMB 11849 / C 71), this protein is ATP synthase gamma chain.